Consider the following 443-residue polypeptide: Probable glycine dehydrogenase (decarboxylating) subunit 1 (443 aa).

This sequence belongs to the GcvP family. N-terminal subunit subfamily. In terms of assembly, the glycine cleavage system is composed of four proteins: P, T, L and H. In this organism, the P 'protein' is a heterodimer of two subunits.

It catalyses the reaction N(6)-[(R)-lipoyl]-L-lysyl-[glycine-cleavage complex H protein] + glycine + H(+) = N(6)-[(R)-S(8)-aminomethyldihydrolipoyl]-L-lysyl-[glycine-cleavage complex H protein] + CO2. Its function is as follows. The glycine cleavage system catalyzes the degradation of glycine. The P protein binds the alpha-amino group of glycine through its pyridoxal phosphate cofactor; CO(2) is released and the remaining methylamine moiety is then transferred to the lipoamide cofactor of the H protein. The chain is Probable glycine dehydrogenase (decarboxylating) subunit 1 from Maridesulfovibrio salexigens (strain ATCC 14822 / DSM 2638 / NCIMB 8403 / VKM B-1763) (Desulfovibrio salexigens).